The chain runs to 268 residues: uncharacterized protein (268 aa).

Transmembrane regions (helical) follow at residues 32-52, 70-90, 125-145, and 237-257; these read SLLL…IFFI, VFVG…AFLF, GVSS…FYIF, and IKYI…AYLT.

It belongs to the CbiQ family.

It is found in the cell membrane. This is an uncharacterized protein from Methanocaldococcus jannaschii (strain ATCC 43067 / DSM 2661 / JAL-1 / JCM 10045 / NBRC 100440) (Methanococcus jannaschii).